A 287-amino-acid polypeptide reads, in one-letter code: ATP synthase gamma chain (287 aa).

The protein belongs to the ATPase gamma chain family. In terms of assembly, F-type ATPases have 2 components, CF(1) - the catalytic core - and CF(0) - the membrane proton channel. CF(1) has five subunits: alpha(3), beta(3), gamma(1), delta(1), epsilon(1). CF(0) has three main subunits: a, b and c.

It is found in the cell inner membrane. Produces ATP from ADP in the presence of a proton gradient across the membrane. The gamma chain is believed to be important in regulating ATPase activity and the flow of protons through the CF(0) complex. This is ATP synthase gamma chain from Methylococcus capsulatus (strain ATCC 33009 / NCIMB 11132 / Bath).